A 342-amino-acid chain; its full sequence is N-acetyl-gamma-glutamyl-phosphate reductase (342 aa).

C146 is an active-site residue.

Belongs to the NAGSA dehydrogenase family. Type 1 subfamily.

The protein resides in the cytoplasm. The catalysed reaction is N-acetyl-L-glutamate 5-semialdehyde + phosphate + NADP(+) = N-acetyl-L-glutamyl 5-phosphate + NADPH + H(+). It functions in the pathway amino-acid biosynthesis; L-arginine biosynthesis; N(2)-acetyl-L-ornithine from L-glutamate: step 3/4. Its function is as follows. Catalyzes the NADPH-dependent reduction of N-acetyl-5-glutamyl phosphate to yield N-acetyl-L-glutamate 5-semialdehyde. This chain is N-acetyl-gamma-glutamyl-phosphate reductase, found in Saccharopolyspora erythraea (strain ATCC 11635 / DSM 40517 / JCM 4748 / NBRC 13426 / NCIMB 8594 / NRRL 2338).